We begin with the raw amino-acid sequence, 936 residues long: Intimin (936 aa).

The N-terminal stretch at 1–41 is a signal peptide; it reads MIIHGFCTGTRHKHKLRKTFIMLGAGLGLFFSVNQNSFANG. The LysM domain occupies 63–112; that stretch reads LFYTLKTGESVAQLSKSQGISVPVIWSLNKHLYSSESEMMKASPGQQIIL. 2 Big-1 domains span residues 557 to 650 and 657 to 748; these read ITNF…VIFV and ITEI…VEFF. Positions 780 to 831 constitute a BIG2 domain; that stretch reads KLQATGGNGKYTWKSSNTKIASVDNSGVITLNEKGSATITVVSGDNQSATYT. The cysteines at positions 857 and 934 are disulfide-linked.

This sequence belongs to the intimin/invasin family.

It localises to the cell outer membrane. Functionally, an inverse autotransporter. The sequence is that of Intimin (eae) from Citrobacter freundii.